Reading from the N-terminus, the 56-residue chain is Small ribosomal subunit protein uS14 (56 aa).

Residues Cys-21, Cys-24, Cys-39, and Cys-42 each coordinate Zn(2+).

The protein belongs to the universal ribosomal protein uS14 family. In terms of assembly, component of the 40S small ribosomal subunit. Zn(2+) serves as cofactor.

It localises to the cytoplasm. It is found in the cytosol. The protein resides in the rough endoplasmic reticulum. In terms of biological role, component of the small ribosomal subunit. The ribosome is a large ribonucleoprotein complex responsible for the synthesis of proteins in the cell. The sequence is that of Small ribosomal subunit protein uS14 (rps29) from Hippocampus comes (Tiger tail seahorse).